Here is a 278-residue protein sequence, read N- to C-terminus: Putative glycosyltransferase EpsE (278 aa).

Belongs to the glycosyltransferase 2 family.

In terms of biological role, may be involved in the production of the exopolysaccharide (EPS) component of the extracellular matrix during biofilm formation. EPS is responsible for the adhesion of chains of cells into bundles. Required for biofilm maintenance. In Bacillus subtilis (strain 168), this protein is Putative glycosyltransferase EpsE (epsE).